Consider the following 216-residue polypeptide: Transmembrane emp24 domain-containing protein eca (216 aa).

Positions 1 to 20 (MRDQWICLALVLCALHSACG) are cleaved as a signal peptide. At 21-183 (LYFHISETER…RHTSESTNSR (163 aa)) the chain is on the lumenal side. A GOLD domain is found at 30–126 (RKCFIEEVPD…QLRVHLDIQV (97 aa)). A coiled-coil region spans residues 134–164 (ANVAQKEKLTELQLRIRQLLDQVEQITKEQN). A helical transmembrane segment spans residues 184–203 (VLWWSLAQTVVLVCMGFWQM). Topologically, residues 204–216 (RHLKSFFEAKKLV) are cytoplasmic. The Prevents secretion from ER motif lies at 213 to 216 (KKLV).

This sequence belongs to the EMP24/GP25L family.

The protein localises to the endoplasmic reticulum membrane. In terms of biological role, eca and bai are essential, though not redundant, for dorsoventral patterning of the embryo. Specifically required during early embryogenesis for the activity of maternal tkv, while the zygotic tkv is not affected. The protein is Transmembrane emp24 domain-containing protein eca of Drosophila mojavensis (Fruit fly).